The chain runs to 75 residues: uncharacterized protein (75 aa).

This is an uncharacterized protein from Methanocaldococcus jannaschii (strain ATCC 43067 / DSM 2661 / JAL-1 / JCM 10045 / NBRC 100440) (Methanococcus jannaschii).